Here is a 515-residue protein sequence, read N- to C-terminus: Bifunctional purine biosynthesis protein PurH (515 aa).

The 145-residue stretch at 1–145 (MTKRALISVS…KNHASVTVVV (145 aa)) folds into the MGS-like domain.

This sequence belongs to the PurH family.

It carries out the reaction (6R)-10-formyltetrahydrofolate + 5-amino-1-(5-phospho-beta-D-ribosyl)imidazole-4-carboxamide = 5-formamido-1-(5-phospho-D-ribosyl)imidazole-4-carboxamide + (6S)-5,6,7,8-tetrahydrofolate. The catalysed reaction is IMP + H2O = 5-formamido-1-(5-phospho-D-ribosyl)imidazole-4-carboxamide. It functions in the pathway purine metabolism; IMP biosynthesis via de novo pathway; 5-formamido-1-(5-phospho-D-ribosyl)imidazole-4-carboxamide from 5-amino-1-(5-phospho-D-ribosyl)imidazole-4-carboxamide (10-formyl THF route): step 1/1. The protein operates within purine metabolism; IMP biosynthesis via de novo pathway; IMP from 5-formamido-1-(5-phospho-D-ribosyl)imidazole-4-carboxamide: step 1/1. The polypeptide is Bifunctional purine biosynthesis protein PurH (Streptococcus uberis (strain ATCC BAA-854 / 0140J)).